The sequence spans 473 residues: Cysteine--tRNA ligase (473 aa).

Cysteine 28 is a Zn(2+) binding site. Residues 30–40 (VTVYDLCHLGH) carry the 'HIGH' region motif. Zn(2+)-binding residues include cysteine 213, histidine 238, and glutamate 242. A 'KMSKS' region motif is present at residues 270-274 (KMSKS). Position 273 (lysine 273) interacts with ATP.

The protein belongs to the class-I aminoacyl-tRNA synthetase family. As to quaternary structure, monomer. Zn(2+) is required as a cofactor.

It is found in the cytoplasm. It carries out the reaction tRNA(Cys) + L-cysteine + ATP = L-cysteinyl-tRNA(Cys) + AMP + diphosphate. The chain is Cysteine--tRNA ligase from Blochmanniella pennsylvanica (strain BPEN).